Consider the following 1318-residue polypeptide: 1-phosphatidylinositol 4,5-bisphosphate phosphodiesterase classes I and II (1318 aa).

In terms of domain architecture, PI-PLC X-box spans 318–466; the sequence is DDMDQPMSHY…LRRKIIIKNK (149 aa). Residues H333 and H378 contribute to the active site. The substrate site is built by K464 and K466. The segment covering 466–481 has biased composition (basic residues); that stretch reads KKKHHHHHHHHHHKKP. Disordered stretches follow at residues 466–489 and 505–594; these read KKKHHHHHHHHHHKKPAQVGTPAA and QQVG…KETE. Low complexity-rich tracts occupy residues 528 to 543 and 554 to 563; these read ATGTGTGSAAGTAGHA and KDSTGSSDSD. The span at 571–580 shows a compositional bias: polar residues; it reads LPNTTPNLPS. Residues 585–594 are compositionally biased toward basic and acidic residues; that stretch reads PPEKAQKETE. The region spanning 599–715 is the PI-PLC Y-box domain; sequence ISALVNYVQP…GYLLKPEFMR (117 aa). Residues S628 and R655 each coordinate substrate. Residues 715–843 enclose the C2 domain; sequence RRSDRRLDPF…NLRSEVGQPI (129 aa). Disordered stretches follow at residues 1080–1112 and 1296–1318; these read LDLGDSSEESAAADAGEDLAGGSSSLDGRTQES and GSHSAISPAKSHNSIAAAAEMKT. Residues 1088-1107 show a composition bias toward low complexity; sequence ESAAADAGEDLAGGSSSLDG.

As to expression, expressed in neuronal cell bodies of the optic lobe, central brain, and thoracic ganglia in adults, and the brain of larvae.

It carries out the reaction a 1,2-diacyl-sn-glycero-3-phospho-(1D-myo-inositol-4,5-bisphosphate) + H2O = 1D-myo-inositol 1,4,5-trisphosphate + a 1,2-diacyl-sn-glycerol + H(+). The production of the second messenger molecules diacylglycerol (DAG) and inositol 1,4,5-trisphosphate (IP3) is mediated by activated phosphatidylinositol-specific phospholipase C enzymes. The sequence is that of 1-phosphatidylinositol 4,5-bisphosphate phosphodiesterase classes I and II (Plc21C) from Drosophila melanogaster (Fruit fly).